A 140-amino-acid polypeptide reads, in one-letter code: Histone H3-like centromeric protein A (140 aa).

The interval M1–G46 is disordered. N,N,N-trimethylglycine is present on G2. At S7 the chain carries Phosphoserine; by AURKA and AURKB. A phosphoserine mark is found at S17, S19, and S27. Low complexity predominate over residues P26–S37. Positions Q39–L54 are important for flexibility of DNA ends that protrude from nucleosomes. S68 is subject to Phosphoserine. The interval C75–A116 is CATD.

Belongs to the histone H3 family. Component of centromeric nucleosomes, where DNA is wrapped around a histone octamer core. The octamer contains two molecules each of H2A, H2B, CENPA and H4 assembled in one CENPA-H4 heterotetramer and two H2A-H2B heterodimers. CENPA modulates the DNA-binding characteristics of nucleosomes so that protruding DNA ends have higher flexibility than in nucleosomes containing conventional histone H3. Inhibits binding of histone H1 to nucleosomes, since histone H1 binds preferentially to rigid DNA linkers that protrude from nucleosomes. Nucleosomes containing CENPA also contain histone H2A variants such as MACROH2A and H2A.Z/H2AZ1. The CENPA-H4 heterotetramer is more compact and structurally more rigid than corresponding H3-H4 heterotetramers. Can assemble into nucleosomes that contain both CENPA and histone H3.3; these nucleosomes interact with a single CENPC chain. Heterotrimer composed of HJURP, CENPA and histone H4, where HJURP interacts with the dimer formed by CENPA and histone H4 and prevents tetramerization of CENPA and H4. Component of the CENPA-NAC complex, at least composed of CENPA, CENPC, CENPH, CENPM, CENPN, CENPT and CENPU. Interacts (via CATD domain) with HJURP; the interaction is direct and is required for its localization to centromeres. Interacts with CENPC, CENPN and CENPT; interaction is direct. Part of a centromere complex consisting of CENPA, CENPT and CENPW. Identified in centromere complexes containing histones H2A, H2B and H4, and at least CENPA, CENPB, CENPC, CENPT, CENPN, HJURP, SUPT16H, SSRP1 and RSF1. Can self-associate. The CENPA-H4 heterotetramer can bind DNA by itself (in vitro). Interacts with CDK1, PPP1CA and RBBP7. As to quaternary structure, (Microbial infection) Interacts directly with herpes virus HHV-1 protein ICP0. In terms of processing, ubiquitinated. Interaction with herpes virus HSV-1 ICP0 protein, leads to its degradation by the proteasome pathway. Trimethylated by NTMT1 at the N-terminal glycine after cleavage of Met-1. Methylation is low before incorporation into nucleosomes and increases with cell cycle progression, with the highest levels in mitotic nucleosomes. Post-translationally, phosphorylated by CDK1 at Ser-68 during early mitosis; this abolishes association with chromatin and centromeres, prevents interaction with HJURP and thereby prevents premature assembly of CENPA into centromeres. Dephosphorylated at Ser-68 by PPP1CA during late mitosis. Phosphorylation of Ser-7 by AURKA and AURKB during prophase is required for localization of AURKA and AURKB at inner centromere and is essential for normal cytokinesis. Initial phosphorylation during prophase is mediated by AURKA and is maintained by AURKB. In terms of processing, poly-ADP-ribosylated by PARP1.

It localises to the nucleus. The protein resides in the chromosome. It is found in the centromere. Functionally, histone H3-like nucleosomal protein that is specifically found in centromeric nucleosomes. Replaces conventional H3 in the nucleosome core of centromeric chromatin that serves as an assembly site for the inner kinetochore. The presence of CENPA subtly modifies the nucleosome structure and the way DNA is wrapped around the nucleosome and gives rise to protruding DNA ends that are less well-ordered and rigid compared to nucleosomes containing histone H3. May serve as an epigenetic mark that propagates centromere identity through replication and cell division. Required for recruitment and assembly of kinetochore proteins, and as a consequence required for progress through mitosis, chromosome segregation and cytokinesis. In Homo sapiens (Human), this protein is Histone H3-like centromeric protein A (CENPA).